We begin with the raw amino-acid sequence, 177 residues long: ATP synthase subunit delta (177 aa).

The protein belongs to the ATPase delta chain family. F-type ATPases have 2 components, F(1) - the catalytic core - and F(0) - the membrane proton channel. F(1) has five subunits: alpha(3), beta(3), gamma(1), delta(1), epsilon(1). F(0) has three main subunits: a(1), b(2) and c(10-14). The alpha and beta chains form an alternating ring which encloses part of the gamma chain. F(1) is attached to F(0) by a central stalk formed by the gamma and epsilon chains, while a peripheral stalk is formed by the delta and b chains.

It is found in the cell membrane. F(1)F(0) ATP synthase produces ATP from ADP in the presence of a proton or sodium gradient. F-type ATPases consist of two structural domains, F(1) containing the extramembraneous catalytic core and F(0) containing the membrane proton channel, linked together by a central stalk and a peripheral stalk. During catalysis, ATP synthesis in the catalytic domain of F(1) is coupled via a rotary mechanism of the central stalk subunits to proton translocation. In terms of biological role, this protein is part of the stalk that links CF(0) to CF(1). It either transmits conformational changes from CF(0) to CF(1) or is implicated in proton conduction. In Exiguobacterium sp. (strain ATCC BAA-1283 / AT1b), this protein is ATP synthase subunit delta.